The chain runs to 35 residues: Photosystem II reaction center protein T (35 aa).

The helical transmembrane segment at 3–23 threads the bilayer; sequence ALVYTFLLVSTLGIIFFAIFF.

Belongs to the PsbT family. As to quaternary structure, PSII is composed of 1 copy each of membrane proteins PsbA, PsbB, PsbC, PsbD, PsbE, PsbF, PsbH, PsbI, PsbJ, PsbK, PsbL, PsbM, PsbT, PsbY, PsbZ, Psb30/Ycf12, at least 3 peripheral proteins of the oxygen-evolving complex and a large number of cofactors. It forms dimeric complexes.

The protein resides in the plastid. The protein localises to the chloroplast thylakoid membrane. Functionally, found at the monomer-monomer interface of the photosystem II (PS II) dimer, plays a role in assembly and dimerization of PSII. PSII is a light-driven water plastoquinone oxidoreductase, using light energy to abstract electrons from H(2)O, generating a proton gradient subsequently used for ATP formation. In Cedrus deodara (Deodar cedar), this protein is Photosystem II reaction center protein T.